Here is a 347-residue protein sequence, read N- to C-terminus: Involucrin (347 aa).

2 disordered regions span residues 1-43 and 56-347; these read MSQQ…LPAP and PLED…RRSL. The segment covering 27–36 has biased composition (polar residues); sequence ADTQQEQVKQ. 2 stretches are compositionally biased toward low complexity: residues 70-114 and 138-161; these read VPEQ…QQES and DQQQ…QQES. Composition is skewed to basic and acidic residues over residues 164-173 and 212-221; these read QELHVDHHQQ. Low complexity-rich tracts occupy residues 222-241 and 265-285; these read QQES…QQES and DQQQ…QQQE. Residues 287–341 are compositionally biased toward basic and acidic residues; the sequence is QEDHQKAEHLEQEEAQREQQLKGQLEQEKKGVYQHLDQELTKRDEHLEKKGEHCW.

Belongs to the involucrin family. Directly or indirectly cross-linked to cornifelin (CNFN). Post-translationally, substrate of transglutaminase. Specific glutamines or lysines are cross-linked to keratins, desmoplakin and to inter involucrin molecules. In terms of tissue distribution, keratinocytes of epidermis and other stratified squamous epithelia.

It is found in the cytoplasm. In terms of biological role, part of the insoluble cornified cell envelope (CE) of stratified squamous epithelia. This is Involucrin (IVL) from Sus scrofa (Pig).